Reading from the N-terminus, the 257-residue chain is MMRADGRSSCELRPVHIHPHYMKHAEGSVLIEVGDTKVICTATVEEKVPSFMRGGGKGWITAEYGMLPRATEQRNVREASKGKVSGRTMEIQRLIGRALRSVVDLEQLGERTIWIDCDVIQADGGTRTASITGAYVALVLALAKLVEEGRLEALPIRDFLAATSVGIDPEHGVILDLDYNEDARAKVDMNVVMTGAGQFVEIQGTGEEAVFSRAELDELLEAAQIGIEQLIAVQRRALGEWAARIGEKKEAAEEDTE.

Phosphate-binding positions include Arg87 and 125 to 127 (GTR).

The protein belongs to the RNase PH family. Homohexameric ring arranged as a trimer of dimers.

It carries out the reaction tRNA(n+1) + phosphate = tRNA(n) + a ribonucleoside 5'-diphosphate. Phosphorolytic 3'-5' exoribonuclease that plays an important role in tRNA 3'-end maturation. Removes nucleotide residues following the 3'-CCA terminus of tRNAs; can also add nucleotides to the ends of RNA molecules by using nucleoside diphosphates as substrates, but this may not be physiologically important. Probably plays a role in initiation of 16S rRNA degradation (leading to ribosome degradation) during starvation. This is Ribonuclease PH from Geobacillus kaustophilus (strain HTA426).